The following is a 577-amino-acid chain: MRPFLLRAAQLLALLALALSTEAPSLSAETTPGPVTEVPSPSAEVWDLSTEAGDDDLDGDLNGDDRRAGFGSALASLREAPPAHLVNVSEGANFTLDARGDGAVVAGIWTFLPVRGCDAVAVTMVCFETACHPDLVLGRACVPEAPERGIGDYLPPEVPRLQREPPIVTPERWSPHLTVRRATPNDTGLYTLHDASGPRAVFFVAVGDRPPAPLAPVGPARHEPRFHALGFHSQLFSPGDTFDLMPRVVSDMGDSRENFTATLDWYYARAPPRCLLYYVYEPCIYHPRAPECLRPVDPACSFTSPARAALVARRAYASCSPLLGDRWLTACPFDAFGEEVHTNATADESGLYVLVMTHNGHVATWDYTLVATAAEYVTVIKELTAPARAPGTPWGPGGGDDAIYVDGVTTPAPPARPWNPYGRTTPGRLFVLALGSFVMTCVVGGAVWLCVLCSRRRAASRPFRVPTRAGTRMLSPVYTSLPTHEDYYDGDDDDEEAGDARRRPSSPGGDSGYEGPYVSLDAEDEFSSDEDDGLYVRPEEAPRSGFDVWFRDPEKPEVTNGPNYGVTASRLLNARPA.

A signal peptide spans 1 to 20 (MRPFLLRAAQLLALLALALS). Over 21–428 (TEAPSLSAET…NPYGRTTPGR (408 aa)) the chain is Virion surface. Residues Asn-87 and Asn-93 are each glycosylated (N-linked (GlcNAc...) asparagine; by host). The interaction with gI stretch occupies residues 117 to 141 (CDAVAVTMVCFETACHPDLVLGRAC). Asn-185 and Asn-258 each carry an N-linked (GlcNAc...) asparagine; by host glycan. Intrachain disulfides connect Cys-274/Cys-300, Cys-283/Cys-292, and Cys-319/Cys-331. The N-linked (GlcNAc...) asparagine; by host glycan is linked to Asn-343. A helical membrane pass occupies residues 429–449 (LFVLALGSFVMTCVVGGAVWL). Residues 450 to 577 (CVLCSRRRAA…ASRLLNARPA (128 aa)) lie on the Intravirion side of the membrane. An Internalization motif motif is present at residues 478 to 481 (YTSL). Residues 481 to 538 (LPTHEDYYDGDDDDEEAGDARRRPSSPGGDSGYEGPYVSLDAEDEFSSDEDDGLYVRP) form a disordered region. The acidic stretch occupies residues 485-496 (EDYYDGDDDDEE). 2 stretches are compositionally biased toward acidic residues: residues 488–497 (YDGDDDDEEA) and 521–533 (DAED…EDDG).

Belongs to the alphaherpesvirinae glycoprotein E family. As to quaternary structure, interacts with gI. In terms of processing, phosphorylated within the acidic cluster. Phosphorylation determines whether endocytosed viral gE traffics to the trans-Golgi network or recycles to the cell membrane.

The protein resides in the virion membrane. The protein localises to the host cell membrane. Its subcellular location is the host cell junction. It localises to the host Golgi apparatus membrane. It is found in the host endosome membrane. Functionally, in epithelial cells, the heterodimer gE/gI is required for the cell-to-cell spread of the virus, by sorting nascent virions to cell junctions. Once the virus reaches the cell junctions, virus particles can spread to adjacent cells extremely rapidly through interactions with cellular receptors that accumulate at these junctions. Implicated in basolateral spread in polarized cells. In neuronal cells, gE/gI is essential for the anterograde spread of the infection throughout the host nervous system. Together with US9, the heterodimer gE/gI is involved in the sorting and transport of viral structural components toward axon tips. The protein is Envelope glycoprotein E (gE) of Suid herpesvirus 1 (strain Rice) (SuHV-1).